The primary structure comprises 797 residues: Protocadherin beta-9 (797 aa).

A signal peptide spans 1–26 (MKTRGFSFPRQRQVLFLFLFWGVSLA). Topologically, residues 27–690 (GSGFGRYSVT…AQADLLTVYL (664 aa)) are extracellular. 5 consecutive Cadherin domains span residues 35 to 133 (VTEE…SPVF), 138 to 242 (MVLK…VPQF), 247 to 347 (YETQ…PPEL), 352 to 451 (LSNS…APAF), and 456 to 561 (YTLF…SPFV). Residue Asn-169 is glycosylated (N-linked (GlcNAc...) asparagine). Residue Asn-418 is glycosylated (N-linked (GlcNAc...) asparagine). Asn-567 is a glycosylation site (N-linked (GlcNAc...) asparagine). The Cadherin 6 domain occupies 568–671 (GSAPCTELVP…LVDGFSQPYL (104 aa)). A helical membrane pass occupies residues 691 to 711 (VVALASVSSLFLLSVLLFVAV). Over 712 to 797 (RLCRRSRAAS…TLPNSFGFNY (86 aa)) the chain is Cytoplasmic. The disordered stretch occupies residues 777–797 (HRGGKEIEENSTLPNSFGFNY). A compositionally biased stretch (polar residues) spans 786–797 (NSTLPNSFGFNY).

It localises to the cell membrane. Potential calcium-dependent cell-adhesion protein. May be involved in the establishment and maintenance of specific neuronal connections in the brain. The sequence is that of Protocadherin beta-9 (PCDHB9) from Homo sapiens (Human).